The sequence spans 431 residues: Glutamyl-tRNA(Gln) amidotransferase subunit A (431 aa).

Catalysis depends on charge relay system residues Lys55 and Ser130. The active-site Acyl-ester intermediate is the Ser154.

The protein belongs to the amidase family. GatA subfamily. As to quaternary structure, heterotrimer of A, B and C subunits.

It carries out the reaction L-glutamyl-tRNA(Gln) + L-glutamine + ATP + H2O = L-glutaminyl-tRNA(Gln) + L-glutamate + ADP + phosphate + H(+). In terms of biological role, allows the formation of correctly charged Gln-tRNA(Gln) through the transamidation of misacylated Glu-tRNA(Gln) in organisms which lack glutaminyl-tRNA synthetase. The reaction takes place in the presence of glutamine and ATP through an activated gamma-phospho-Glu-tRNA(Gln). The chain is Glutamyl-tRNA(Gln) amidotransferase subunit A from Methanococcus vannielii (strain ATCC 35089 / DSM 1224 / JCM 13029 / OCM 148 / SB).